Here is a 331-residue protein sequence, read N- to C-terminus: tRNA N6-adenosine threonylcarbamoyltransferase (331 aa).

The Fe cation site is built by H109, H113, and Y130. Substrate contacts are provided by residues 130–134, D162, D183, and S262; that span reads YLSGG. D290 contacts Fe cation.

The protein belongs to the KAE1 / TsaD family. Requires Fe(2+) as cofactor.

Its subcellular location is the cytoplasm. It carries out the reaction L-threonylcarbamoyladenylate + adenosine(37) in tRNA = N(6)-L-threonylcarbamoyladenosine(37) in tRNA + AMP + H(+). Required for the formation of a threonylcarbamoyl group on adenosine at position 37 (t(6)A37) in tRNAs that read codons beginning with adenine. Is probably involved in the transfer of the threonylcarbamoyl moiety of threonylcarbamoyl-AMP (TC-AMP) to the N6 group of A37. The polypeptide is tRNA N6-adenosine threonylcarbamoyltransferase (Metallosphaera sedula (strain ATCC 51363 / DSM 5348 / JCM 9185 / NBRC 15509 / TH2)).